The primary structure comprises 471 residues: Vitellogenic carboxypeptidase (471 aa).

The signal sequence occupies residues 1–19 (MVKFHLLVLIAFTCYTCSD). The N-linked (GlcNAc...) asparagine glycan is linked to asparagine 135. Catalysis depends on residues serine 207, aspartate 391, and histidine 448.

Belongs to the peptidase S10 family. Synthesized in the fat body of vitellogenic females, secreted into the hemolymph and accumulates in yolk bodies of developing oocytes.

Its subcellular location is the secreted. Functionally, may play a role in activating hydrolytic enzymes that are involved in the degradation of yolk proteins in developing embryos or may function as an exopeptidase in the degradation of vitellogenin. This Aedes aegypti (Yellowfever mosquito) protein is Vitellogenic carboxypeptidase (VCP).